The primary structure comprises 214 residues: ATP-dependent Clp protease proteolytic subunit (214 aa).

Catalysis depends on S110, which acts as the Nucleophile. H135 is a catalytic residue.

This sequence belongs to the peptidase S14 family. In terms of assembly, fourteen ClpP subunits assemble into 2 heptameric rings which stack back to back to give a disk-like structure with a central cavity, resembling the structure of eukaryotic proteasomes.

It localises to the cytoplasm. It catalyses the reaction Hydrolysis of proteins to small peptides in the presence of ATP and magnesium. alpha-casein is the usual test substrate. In the absence of ATP, only oligopeptides shorter than five residues are hydrolyzed (such as succinyl-Leu-Tyr-|-NHMec, and Leu-Tyr-Leu-|-Tyr-Trp, in which cleavage of the -Tyr-|-Leu- and -Tyr-|-Trp bonds also occurs).. Its function is as follows. Cleaves peptides in various proteins in a process that requires ATP hydrolysis. Has a chymotrypsin-like activity. Plays a major role in the degradation of misfolded proteins. The chain is ATP-dependent Clp protease proteolytic subunit from Legionella pneumophila (strain Corby).